The chain runs to 230 residues: Biosynthetic peptidoglycan transglycosylase (230 aa).

The chain crosses the membrane as a helical span at residues 10–30 (IFLFFIAVIFVYQFWIFSQIV).

Belongs to the glycosyltransferase 51 family.

Its subcellular location is the cell inner membrane. The enzyme catalyses [GlcNAc-(1-&gt;4)-Mur2Ac(oyl-L-Ala-gamma-D-Glu-L-Lys-D-Ala-D-Ala)](n)-di-trans,octa-cis-undecaprenyl diphosphate + beta-D-GlcNAc-(1-&gt;4)-Mur2Ac(oyl-L-Ala-gamma-D-Glu-L-Lys-D-Ala-D-Ala)-di-trans,octa-cis-undecaprenyl diphosphate = [GlcNAc-(1-&gt;4)-Mur2Ac(oyl-L-Ala-gamma-D-Glu-L-Lys-D-Ala-D-Ala)](n+1)-di-trans,octa-cis-undecaprenyl diphosphate + di-trans,octa-cis-undecaprenyl diphosphate + H(+). It participates in cell wall biogenesis; peptidoglycan biosynthesis. Its function is as follows. Peptidoglycan polymerase that catalyzes glycan chain elongation from lipid-linked precursors. The sequence is that of Biosynthetic peptidoglycan transglycosylase from Nitrosospira multiformis (strain ATCC 25196 / NCIMB 11849 / C 71).